Reading from the N-terminus, the 127-residue chain is MSSKSELESLLNKIVKSNDETEVSKALKEIEDNNEYIEKKQLRSLLTMHDKKFKDQCLIPMNNLYVKYNDIVGKDRNLQNETAFVDRDIRVLESTLQYIIENKNSHNTNHGGCNKTKNSSKDKLLDK.

Positions 103 to 127 are disordered; sequence KNSHNTNHGGCNKTKNSSKDKLLDK. Polar residues predominate over residues 105-117; that stretch reads SHNTNHGGCNKTK.

The protein belongs to the BLOC1S1 family. As to quaternary structure, component of the biogenesis of lysosome-related organelles complex-1 (BLOC-1).

The protein localises to the endosome. Component of the biogenesis of lysosome-related organelles complex-1 (BLOC-1), a complex involved in endosomal cargo sorting. The chain is Biogenesis of lysosome-related organelles complex 1 subunit BLS1 (BLS1) from Vanderwaltozyma polyspora (strain ATCC 22028 / DSM 70294 / BCRC 21397 / CBS 2163 / NBRC 10782 / NRRL Y-8283 / UCD 57-17) (Kluyveromyces polysporus).